Here is a 292-residue protein sequence, read N- to C-terminus: ATP phosphoribosyltransferase (292 aa).

It belongs to the ATP phosphoribosyltransferase family. Long subfamily. It depends on Mg(2+) as a cofactor.

Its subcellular location is the cytoplasm. The enzyme catalyses 1-(5-phospho-beta-D-ribosyl)-ATP + diphosphate = 5-phospho-alpha-D-ribose 1-diphosphate + ATP. Its pathway is amino-acid biosynthesis; L-histidine biosynthesis; L-histidine from 5-phospho-alpha-D-ribose 1-diphosphate: step 1/9. Its activity is regulated as follows. Feedback inhibited by histidine. Its function is as follows. Catalyzes the condensation of ATP and 5-phosphoribose 1-diphosphate to form N'-(5'-phosphoribosyl)-ATP (PR-ATP). Has a crucial role in the pathway because the rate of histidine biosynthesis seems to be controlled primarily by regulation of HisG enzymatic activity. This chain is ATP phosphoribosyltransferase, found in Gemmatimonas aurantiaca (strain DSM 14586 / JCM 11422 / NBRC 100505 / T-27).